A 113-amino-acid chain; its full sequence is Histone H3-8 (113 aa).

A compositionally biased stretch (basic residues) spans 1–17 (NTGAKAPRKHLANKAAR). Positions 1 to 31 (NTGAKAPRKHLANKAARKTAAPANAGIKKPH) are disordered.

Belongs to the histone H3 family. In terms of assembly, the nucleosome is a histone octamer containing two molecules each of H2A, H2B, H3 and H4 assembled in one H3-H4 heterotetramer and two H2A-H2B heterodimers. The octamer wraps approximately 147 bp of DNA.

It localises to the nucleus. The protein resides in the chromosome. Its function is as follows. Core component of nucleosome. Nucleosomes wrap and compact DNA into chromatin, limiting DNA accessibility to the cellular machineries which require DNA as a template. Histones thereby play a central role in transcription regulation, DNA repair, DNA replication and chromosomal stability. DNA accessibility is regulated via a complex set of post-translational modifications of histones, also called histone code, and nucleosome remodeling. In Stylonychia lemnae (Ciliate), this protein is Histone H3-8 (H3-8).